Here is a 168-residue protein sequence, read N- to C-terminus: 3-isopropylmalate dehydratase small subunit (168 aa).

Belongs to the LeuD family. LeuD type 2 subfamily. Heterodimer of LeuC and LeuD.

It catalyses the reaction (2R,3S)-3-isopropylmalate = (2S)-2-isopropylmalate. It participates in amino-acid biosynthesis; L-leucine biosynthesis; L-leucine from 3-methyl-2-oxobutanoate: step 2/4. Catalyzes the isomerization between 2-isopropylmalate and 3-isopropylmalate, via the formation of 2-isopropylmaleate. This is 3-isopropylmalate dehydratase small subunit from Thermodesulfovibrio yellowstonii (strain ATCC 51303 / DSM 11347 / YP87).